The following is a 484-amino-acid chain: Probable peptide/nitrate transporter At3g43790 (484 aa).

The next 12 helical transmembrane spans lie at 39 to 59, 76 to 96, 107 to 127, 129 to 149, 168 to 188, 210 to 230, 278 to 298, 318 to 338, 355 to 375, 381 to 401, 416 to 436, and 460 to 480; these read FIWL…PYIY, FYAG…SIFW, PIIL…GLST, FWLA…LGVI, VVST…GYLA, FLPS…CWWL, MAII…NEIF, VGEV…LVYP, VLLI…GVTL, CASI…FIML, ISMT…GVLF, and VFLV…IPYI.

This sequence belongs to the major facilitator superfamily.

It localises to the membrane. The chain is Probable peptide/nitrate transporter At3g43790 (ZIFL2) from Arabidopsis thaliana (Mouse-ear cress).